A 500-amino-acid chain; its full sequence is Glutamate decarboxylase (500 aa).

Lysine 277 bears the N6-(pyridoxal phosphate)lysine mark. Residues 469–500 (VHKKTDSEVQLEMITAWKKFVEEKKKKTNRVC) form a calmodulin-binding region.

The protein belongs to the group II decarboxylase family. As to quaternary structure, homodimer. It depends on pyridoxal 5'-phosphate as a cofactor.

The catalysed reaction is L-glutamate + H(+) = 4-aminobutanoate + CO2. Functionally, catalyzes the production of GABA. The calmodulin-binding is calcium-dependent and it is proposed that this may, directly or indirectly, form a calcium regulated control of GABA biosynthesis. In Petunia hybrida (Petunia), this protein is Glutamate decarboxylase (GAD).